A 374-amino-acid chain; its full sequence is 2,7-anhydro-N-acetylneuraminate hydratase (374 aa).

NAD(+) contacts are provided by tyrosine 13, phenylalanine 14, aspartate 35, asparagine 38, threonine 70, asparagine 72, histidine 75, glutamate 92, lysine 93, tryptophan 162, and lysine 163.

Belongs to the Gfo/Idh/MocA family. As to quaternary structure, homodimer. NAD(+) is required as a cofactor.

The catalysed reaction is N-acetyl-2,7-anhydro-alpha-neuraminate + H2O = N-acetyl-alpha-neuraminate. Its activity is regulated as follows. Neu5Ac is produced in the presence of NAD(+) or NADH, but not in the presence of FAD. Functionally, hydratase involved in the degradation of sialic acids, which are present in the host mucus layer and represent a much-coveted source of nutrients for R.gnavus, a prevalent member of the normal gut microbiota. Catalyzes the reversible conversion of the dehydrated form of N-acetylneuraminate (Neu5Ac), 2,7-anhydro-N-acetylneuraminate (2,7-AN), to Neu5Ac, allowing growth on 2,7-AN produced by the IT-sialidase NanH. Acts through a multistep mechanism involving a keto intermediate and cycling of NADH/NAD(+). The chain is 2,7-anhydro-N-acetylneuraminate hydratase from Mediterraneibacter gnavus (strain ATCC 29149 / DSM 114966 / JCM 6515 / VPI C7-9) (Ruminococcus gnavus).